The chain runs to 843 residues: Protein P (843 aa).

Residues 1–177 form a terminal protein domain (TP) region; that stretch reads MPLSYPHFRK…FCGSQYSWEQ (177 aa). Residues 178 to 346 form a spacer region; it reads ELQHGSTSLN…YCLSHIINLL (169 aa). Disordered stretches follow at residues 228-255 and 284-314; these read KQGQ…RWPA and EANP…SVGS. Over residues 239–249 the composition is skewed to basic residues; sequence RSGRLRSRVHT. Residues 347-690 are polymerase/reverse transcriptase domain (RT); that stretch reads EDWGPCYEHG…YMNLYPVARQ (344 aa). The Reverse transcriptase domain occupies 357 to 600; that stretch reads EHHIRTPRTP…YNLHFMGYVI (244 aa). 3 residues coordinate Mg(2+): aspartate 429, aspartate 551, and aspartate 552.

Belongs to the hepadnaviridae P protein family.

The catalysed reaction is DNA(n) + a 2'-deoxyribonucleoside 5'-triphosphate = DNA(n+1) + diphosphate. It carries out the reaction Endonucleolytic cleavage to 5'-phosphomonoester.. With respect to regulation, activated by host HSP70 and HSP40 in vitro to be able to bind the epsilon loop of the pgRNA. Because deletion of the RNase H region renders the protein partly chaperone-independent, the chaperones may be needed indirectly to relieve occlusion of the RNA-binding site by this domain. Inhibited by several reverse-transcriptase inhibitors: Lamivudine, Adefovir and Entecavir. Multifunctional enzyme that converts the viral RNA genome into dsDNA in viral cytoplasmic capsids. This enzyme displays a DNA polymerase activity that can copy either DNA or RNA templates, and a ribonuclease H (RNase H) activity that cleaves the RNA strand of RNA-DNA heteroduplexes in a partially processive 3'- to 5'-endonucleasic mode. Neo-synthesized pregenomic RNA (pgRNA) are encapsidated together with the P protein, and reverse-transcribed inside the nucleocapsid. Initiation of reverse-transcription occurs first by binding the epsilon loop on the pgRNA genome, and is initiated by protein priming, thereby the 5'-end of (-)DNA is covalently linked to P protein. Partial (+)DNA is synthesized from the (-)DNA template and generates the relaxed circular DNA (RC-DNA) genome. After budding and infection, the RC-DNA migrates in the nucleus, and is converted into a plasmid-like covalently closed circular DNA (cccDNA). The activity of P protein does not seem to be necessary for cccDNA generation, and is presumably released from (+)DNA by host nuclear DNA repair machinery. The polypeptide is Protein P (Hepatitis B virus genotype F2 subtype adw4q (isolate Senegal/9203) (HBV-F)).